The chain runs to 582 residues: uncharacterized protein (582 aa).

The helical transmembrane segment at Gly20–Val40 threads the bilayer.

The protein localises to the membrane. This is an uncharacterized protein from Mycoplasma pneumoniae (strain ATCC 29342 / M129 / Subtype 1) (Mycoplasmoides pneumoniae).